Consider the following 252-residue polypeptide: Mitochondrial intermembrane space import and assembly protein 40 (252 aa).

A mitochondrion-targeting transit peptide spans 1–31 (MYRTISRSSSGLIRQSTARLTRQLSTTRTTP). Residues 32 to 37 (SQYNSK) lie on the Mitochondrial matrix side of the membrane. The chain crosses the membrane as a helical; Signal-anchor for type II membrane protein span at residues 38–54 (LLLGVLGTGALAFGYFS). Topologically, residues 55-252 (QQSSLIQNAS…DKVKPNTKSD (198 aa)) are mitochondrial intermembrane. A compositionally biased stretch (basic and acidic residues) spans 90–123 (RQEKVIKENEQKTKKAEDAKTSSESKANVADKKS). A disordered region spans residues 90 to 143 (RQEKVIKENEQKTKKAEDAKTSSESKANVADKKSNSQPEGEPEGEGKQEAAFNP). Intrachain disulfides connect cysteine 152/cysteine 154, cysteine 163/cysteine 196, and cysteine 173/cysteine 186. The region spanning 160–204 (HGPCGEEFKEAFSCFVFSETEPKGIDCIKKFENMRSCFKRYPEHY) is the CHCH domain. 2 consecutive short sequence motifs (cx9C motif) follow at residues 163–173 (CGEEFKEAFSC) and 186–196 (CIKKFENMRSC). The disordered stretch occupies residues 230–252 (EPAIEQIEQGIKEDKVKPNTKSD). Residues 239 to 252 (GIKEDKVKPNTKSD) show a composition bias toward basic and acidic residues.

Monomer. Requires Cu(2+) as cofactor. Zn(2+) serves as cofactor.

The protein resides in the mitochondrion inner membrane. Its function is as follows. Required for the import and folding of small cysteine-containing proteins (small Tim) in the mitochondrial intermembrane space (IMS). Forms a redox cycle with ERV1 that involves a disulfide relay system. Precursor proteins to be imported into the IMS are translocated in their reduced form into the mitochondria. The oxidized form of MIA40 forms a transient intermolecular disulfide bridge with the reduced precursor protein, resulting in oxidation of the precursor protein that now contains an intramolecular disulfide bond and is able to undergo folding in the IMS. The sequence is that of Mitochondrial intermembrane space import and assembly protein 40 (MIA40) from Candida albicans (strain SC5314 / ATCC MYA-2876) (Yeast).